The chain runs to 299 residues: MLEVNLFGIKFKNPLILASGVVDMTPELLRRAHREGAGGVVTKSIGMEPRKGYENPTIVELPYGLINAMGLPNPGWEAFLEEFRKEKFDFPVIVSIFGGTPEEFAFLAEKLGEVADAFELNLSCPHAKGYGMEIGQKPENVYEVVKAVKDVTDKPVIAKLTPNVSDIRELGLAAEKAGADGVSAINTVKAIAIDIYAKRPILSNKFGGYSGPGVKPIALRAVYDLASSLDIPVIGIGGITTWQDAVEFLLAGASALQIGTAVYLRGFSVFREIAEGISRYLKEEGYSSVKEIIGLALKV.

FMN is bound by residues serine 19 and 43–44; that span reads KS. Residues lysine 43, 67–71, and asparagine 121 contribute to the substrate site; that span reads NAMGL. Asparagine 121 is a binding site for FMN. Cysteine 124 serves as the catalytic Nucleophile. FMN-binding residues include lysine 159 and isoleucine 185. Residue 186–187 coordinates substrate; it reads NT. FMN is bound by residues glycine 211, 237-238, and 259-260; these read GG and GT.

This sequence belongs to the dihydroorotate dehydrogenase family. Type 1 subfamily. In terms of assembly, heterotetramer of 2 PyrK and 2 PyrD type B subunits. It depends on FMN as a cofactor.

Its subcellular location is the cytoplasm. The catalysed reaction is (S)-dihydroorotate + NAD(+) = orotate + NADH + H(+). It functions in the pathway pyrimidine metabolism; UMP biosynthesis via de novo pathway; orotate from (S)-dihydroorotate (NAD(+) route): step 1/1. In terms of biological role, catalyzes the conversion of dihydroorotate to orotate with NAD(+) as electron acceptor. The sequence is that of Dihydroorotate dehydrogenase B (NAD(+)), catalytic subunit (pyrD) from Pyrococcus abyssi (strain GE5 / Orsay).